We begin with the raw amino-acid sequence, 506 residues long: MNNFELILLYYGKKIFMSFVKDFKLLLKARYPIIYINTYEEERVEYVIKSAIQSFTNRAVYSWDFIEGYCNNPNDNGYAIRNPLQALEFIDKFTLETPLLVLLKDFHLFLNDISVSRKLRNLAKSLRNQSKTIVIIASDLTIPLNLSDSITILHFPLPKNSEIKKELLRIQESLGYSLPEHSLDNLVKASQGLSLEKIRRVLAKIIATYKEINVESLDLVFKEKQQLISQTQILEFYNPVTKISDIGGLNELKSWLKFRAASFSKRAEEYGLPIPKGLLLVGIQGTGKSLTAKSIANEWNLPLLKLDVGRLFGGIIGESEARVRQMIQFAETISPCILWIDEIDKAFTGSNFNNDSGTTKRVFGTFITWLSEKKSPVFVVATANNIDSLPPELLRKGRFDEVFFIGLPDLKERECIFKVHLKKIRPKSWSTYDTEILSAQSNRFSGAEIEESIYEAMHIAFNENREFTTSDILNSLKRVVPLAYTSQKNIEELEDWASAGKIRLAS.

282 to 289 provides a ligand contact to ATP; the sequence is GIQGTGKS.

Belongs to the AAA ATPase family. Highly divergent.

It localises to the plastid. The protein resides in the chloroplast. This is an uncharacterized protein from Guillardia theta (Cryptophyte).